We begin with the raw amino-acid sequence, 205 residues long: Quinone-oxidoreductase QR2 (205 aa).

A Flavodoxin-like domain is found at 5–192 (VYIVYYSTYG…LKQAFHQGMY (188 aa)). Residues 11–15 (STYGH), 112–165 (IFFS…SPYG), and His-136 contribute to the FMN site. NAD(+) is bound at residue Tyr-13.

The protein belongs to the WrbA family. It depends on FMN as a cofactor.

It carries out the reaction a quinone + NADH + H(+) = a quinol + NAD(+). It catalyses the reaction a quinone + NADPH + H(+) = a quinol + NADP(+). Its activity is regulated as follows. Inhibited by dicumarol. NAD(P)H:quinone oxidoreductase reducing quinones by a two-electron transfer mechanism. Can use either NADPH or NADH as electron donor. Can use menadione, 5-hydroxy-1,4-naphthoquinone (juglone) and 2,6-dimethoxy-p-benzoquinone (DMBQ) as substrates. Mitigates the toxicity of exogenous quinones in the rhizosphere. This chain is Quinone-oxidoreductase QR2, found in Triphysaria versicolor (Yellow owl's clover).